The chain runs to 216 residues: Orotate phosphoribosyltransferase (216 aa).

Lys-30 contacts 5-phospho-alpha-D-ribose 1-diphosphate. Residue Phe-38–Phe-39 coordinates orotate. Residues Tyr-75–Lys-76, Arg-102, Lys-103, Lys-106, His-108, and Asp-128–Ala-136 each bind 5-phospho-alpha-D-ribose 1-diphosphate. Thr-132 and Arg-160 together coordinate orotate.

This sequence belongs to the purine/pyrimidine phosphoribosyltransferase family. PyrE subfamily. Homodimer. Mg(2+) is required as a cofactor.

The enzyme catalyses orotidine 5'-phosphate + diphosphate = orotate + 5-phospho-alpha-D-ribose 1-diphosphate. It functions in the pathway pyrimidine metabolism; UMP biosynthesis via de novo pathway; UMP from orotate: step 1/2. Functionally, catalyzes the transfer of a ribosyl phosphate group from 5-phosphoribose 1-diphosphate to orotate, leading to the formation of orotidine monophosphate (OMP). This is Orotate phosphoribosyltransferase from Acinetobacter baumannii (strain AB307-0294).